Here is a 248-residue protein sequence, read N- to C-terminus: Pyridoxine 5'-phosphate synthase (248 aa).

Residue asparagine 7 participates in 3-amino-2-oxopropyl phosphate binding. 9-10 (DH) serves as a coordination point for 1-deoxy-D-xylulose 5-phosphate. Arginine 18 contacts 3-amino-2-oxopropyl phosphate. Histidine 52 functions as the Proton acceptor in the catalytic mechanism. The 1-deoxy-D-xylulose 5-phosphate site is built by arginine 54 and histidine 59. The active-site Proton acceptor is glutamate 79. Threonine 109 lines the 1-deoxy-D-xylulose 5-phosphate pocket. Histidine 201 serves as the catalytic Proton donor. 3-amino-2-oxopropyl phosphate is bound by residues glycine 202 and 223-224 (GH).

This sequence belongs to the PNP synthase family. In terms of assembly, homooctamer; tetramer of dimers.

It localises to the cytoplasm. The enzyme catalyses 3-amino-2-oxopropyl phosphate + 1-deoxy-D-xylulose 5-phosphate = pyridoxine 5'-phosphate + phosphate + 2 H2O + H(+). Its pathway is cofactor biosynthesis; pyridoxine 5'-phosphate biosynthesis; pyridoxine 5'-phosphate from D-erythrose 4-phosphate: step 5/5. Functionally, catalyzes the complicated ring closure reaction between the two acyclic compounds 1-deoxy-D-xylulose-5-phosphate (DXP) and 3-amino-2-oxopropyl phosphate (1-amino-acetone-3-phosphate or AAP) to form pyridoxine 5'-phosphate (PNP) and inorganic phosphate. In Opitutus terrae (strain DSM 11246 / JCM 15787 / PB90-1), this protein is Pyridoxine 5'-phosphate synthase.